Reading from the N-terminus, the 200-residue chain is LHFPL tetraspan subfamily member 6 protein (200 aa).

A signal peptide spans 1–23 (MASSLTCTGVIWALLSFLSAATS). The next 3 helical transmembrane spans lie at 84 to 104 (ICTIVTGLGCGLLLLVALTAL), 123 to 143 (GIQFLGGLLIGAGCALYPLGW), and 166 to 186 (IGWAYYCTGAGAAAAMLLCTW).

The protein belongs to the LHFP family.

It localises to the membrane. The sequence is that of LHFPL tetraspan subfamily member 6 protein from Rattus norvegicus (Rat).